The primary structure comprises 256 residues: 2-aminoethanethiol dioxygenase (256 aa).

The Fe cation site is built by H100, H102, and H179.

As to quaternary structure, monomer. Fe cation serves as cofactor. As to expression, ubiquitous, with highest expression in brain, heart and skeletal muscle (at protein level).

It catalyses the reaction cysteamine + O2 = hypotaurine + H(+). The catalysed reaction is N-terminal L-cysteinyl-[protein] + O2 = N-terminal S-hydroxy-S-oxy-L-cysteinyl-[protein] + H(+). Its function is as follows. Plays a vital role in regulating thiol metabolism and preserving oxygen homeostasis by oxidizing the sulfur of cysteamine and N-terminal cysteine-containing proteins to their corresponding sulfinic acids using O2 as a cosubstrate. Catalyzes the oxidation of cysteamine (2-aminoethanethiol) to hypotaurine. Catalyzes the oxidation of the regulator of G-protein signaling 5 (RGS5). Also oxidizes proteins RGS4 and interleukin-32 (IL32). The sequence is that of 2-aminoethanethiol dioxygenase (Ado) from Mus musculus (Mouse).